Here is a 201-residue protein sequence, read N- to C-terminus: Small ribosomal subunit protein uS4 (201 aa).

The S4 RNA-binding domain occupies 91–151 (SRLDNVVYRA…EKSQKMNWFE (61 aa)).

This sequence belongs to the universal ribosomal protein uS4 family. In terms of assembly, part of the 30S ribosomal subunit. Contacts protein S5. The interaction surface between S4 and S5 is involved in control of translational fidelity.

Its function is as follows. One of the primary rRNA binding proteins, it binds directly to 16S rRNA where it nucleates assembly of the body of the 30S subunit. In terms of biological role, with S5 and S12 plays an important role in translational accuracy. This Corynebacterium glutamicum (strain ATCC 13032 / DSM 20300 / JCM 1318 / BCRC 11384 / CCUG 27702 / LMG 3730 / NBRC 12168 / NCIMB 10025 / NRRL B-2784 / 534) protein is Small ribosomal subunit protein uS4.